We begin with the raw amino-acid sequence, 309 residues long: Flavonol sulfotransferase-like (309 aa).

59-64 (KTGTTW) provides a ligand contact to 3'-phosphoadenylyl sulfate. H119 (proton acceptor) is an active-site residue. 3'-phosphoadenylyl sulfate is bound by residues R141, S149, Y207, and 274-276 (RKG).

The protein belongs to the sulfotransferase 1 family.

Its subcellular location is the cytoplasm. This is Flavonol sulfotransferase-like from Flaveria bidentis (Coastal plain yellowtops).